The following is a 316-amino-acid chain: Porphobilinogen deaminase (316 aa).

Cysteine 242 is subject to S-(dipyrrolylmethanemethyl)cysteine.

Belongs to the HMBS family. In terms of assembly, monomer. Requires dipyrromethane as cofactor.

It catalyses the reaction 4 porphobilinogen + H2O = hydroxymethylbilane + 4 NH4(+). It participates in porphyrin-containing compound metabolism; protoporphyrin-IX biosynthesis; coproporphyrinogen-III from 5-aminolevulinate: step 2/4. Tetrapolymerization of the monopyrrole PBG into the hydroxymethylbilane pre-uroporphyrinogen in several discrete steps. This chain is Porphobilinogen deaminase, found in Thioalkalivibrio sulfidiphilus (strain HL-EbGR7).